Consider the following 645-residue polypeptide: Cytochrome c oxidase subunit 1 (645 aa).

The chain crosses the membrane as a helical span at residues 8-28 (LNYFYFSMWTGLSGAALATMI). Residues E31 and G36 each contribute to the Ca(2+) site. H54 lines the Fe(II)-heme a pocket. 8 consecutive transmembrane segments (helical) span residues 56-76 (LIMV…NFLI), 90-110 (LNSI…KIAF), 247-267 (VLSV…LTLI), 282-302 (VLIP…AIVT), 337-357 (LFWF…FGVA), 376-396 (IWAV…HMYL), 410-430 (ITIM…LTLA), and 438-458 (LVFL…FTGM). H343 lines the Cu cation pocket. A cross-link (1'-histidyl-3'-tyrosine (His-Tyr)) is located at residues 343–347 (HPEVY). Y347 contacts O2. Residues H392 and H393 each coordinate Cu cation. 2 residues coordinate Mg(2+): H470 and D471. The next 3 membrane-spanning stretches (helical) occupy residues 475 to 495 (VVAH…FTGL), 513 to 533 (FLHL…MFFL), and 555 to 575 (LASC…FGIF). A heme a3-binding site is contributed by H478. H480 lines the Fe(II)-heme a pocket.

The protein belongs to the heme-copper respiratory oxidase family. In terms of assembly, component of the cytochrome c oxidase (complex IV, CIV), a multisubunit enzyme composed of a catalytic core of 3 subunits and several supernumerary subunits. The complex exists as a monomer or a dimer and forms supercomplexes (SCs) in the inner mitochondrial membrane with ubiquinol-cytochrome c oxidoreductase (cytochrome b-c1 complex, complex III, CIII). Requires heme as cofactor. The cofactor is Cu cation.

Its subcellular location is the mitochondrion inner membrane. The catalysed reaction is 4 Fe(II)-[cytochrome c] + O2 + 8 H(+)(in) = 4 Fe(III)-[cytochrome c] + 2 H2O + 4 H(+)(out). It functions in the pathway energy metabolism; oxidative phosphorylation. Component of the cytochrome c oxidase, the last enzyme in the mitochondrial electron transport chain which drives oxidative phosphorylation. The respiratory chain contains 3 multisubunit complexes succinate dehydrogenase (complex II, CII), ubiquinol-cytochrome c oxidoreductase (cytochrome b-c1 complex, complex III, CIII) and cytochrome c oxidase (complex IV, CIV), that cooperate to transfer electrons derived from NADH and succinate to molecular oxygen, creating an electrochemical gradient over the inner membrane that drives transmembrane transport and the ATP synthase. Cytochrome c oxidase is the component of the respiratory chain that catalyzes the reduction of oxygen to water. Electrons originating from reduced cytochrome c in the intermembrane space (IMS) are transferred via the dinuclear copper A center (CU(A)) of subunit 2 and heme A of subunit 1 to the active site in subunit 1, a binuclear center (BNC) formed by heme A3 and copper B (CU(B)). The BNC reduces molecular oxygen to 2 water molecules using 4 electrons from cytochrome c in the IMS and 4 protons from the mitochondrial matrix. The sequence is that of Cytochrome c oxidase subunit 1 (COI) from Paramecium tetraurelia.